Reading from the N-terminus, the 267-residue chain is Oxidoreductase ordB (267 aa).

The protein belongs to the avfA family.

It functions in the pathway mycotoxin biosynthesis. In terms of biological role, oxidoreductase; part of the fragmented gene cluster that mediates the biosynthesis of dothistromin (DOTH), a polyketide toxin very similar in structure to the aflatoxin precursor, versicolorin B. The first step of the pathway is the conversion of acetate to norsolorinic acid (NOR) and requires the fatty acid synthase subunits hexA and hexB, as well as the polyketide synthase pksA. PksA combines a hexanoyl starter unit and 7 malonyl-CoA extender units to synthesize the precursor NOR. The hexanoyl starter unit is provided to the acyl-carrier protein (ACP) domain by the fungal fatty acid synthase hexA/hexB. The second step is the conversion of NOR to averantin (AVN) and requires the norsolorinic acid ketoreductase nor1, which catalyzes the dehydration of norsolorinic acid to form (1'S)-averantin. The cytochrome P450 monooxygenase avnA then catalyzes the hydroxylation of AVN to 5'hydroxyaverantin (HAVN). The next step is performed by adhA that transforms HAVN to averufin (AVF). Averufin might then be converted to hydroxyversicolorone by cypX and avfA. Hydroxyversicolorone is further converted versiconal hemiacetal acetate (VHA) by moxY. VHA is then the substrate for the versiconal hemiacetal acetate esterase est1 to yield versiconal (VAL). Versicolorin B synthase vbsA then converts VAL to versicolorin B (VERB) by closing the bisfuran ring. Then, the activity of the versicolorin B desaturase verB leads to versicolorin A (VERA). DotB, a predicted chloroperoxidase, may perform epoxidation of the A-ring of VERA. Alternatively, a cytochrome P450, such as cypX or avnA could catalyze this step. It is also possible that another, uncharacterized, cytochrome P450 enzyme is responsible for this step. Opening of the epoxide could potentially be achieved by the epoxide hydrolase epoA. However, epoA seems not to be required for DOTH biosynthesis, but other epoxide hydrolases may have the ability to complement this hydrolysis. Alternatively, opening of the epoxide ring could be achieved non-enzymatically. The next step is the deoxygenation of ring A to yield the 5,8-dihydroxyanthraquinone which is most likely catalyzed by the NADPH dehydrogenase encoded by ver1. The last stages of DOTH biosynthesis are proposed to involve hydroxylation of the bisfuran. OrdB and norB might have oxidative roles here. An alternative possibility is that cytochrome P450 monoogenases such as avnA and cypX might perform these steps in addition to previously proposed steps. This is Oxidoreductase ordB from Dothistroma septosporum (strain NZE10 / CBS 128990) (Red band needle blight fungus).